The chain runs to 233 residues: Small ribosomal subunit protein uS3 (233 aa).

Residues 39–107 (VRQFLMKTLE…PVQINISEVR (69 aa)) enclose the KH type-2 domain.

The protein belongs to the universal ribosomal protein uS3 family. Part of the 30S ribosomal subunit. Forms a tight complex with proteins S10 and S14.

Binds the lower part of the 30S subunit head. Binds mRNA in the 70S ribosome, positioning it for translation. The chain is Small ribosomal subunit protein uS3 from Buchnera aphidicola subsp. Acyrthosiphon pisum (strain 5A).